Reading from the N-terminus, the 576-residue chain is MGGGGNLVDGVRRWLFFQRRPSSSSSSNNHDQIQNPPTVSNPNDDEDLKKLTDPSKLRQIKVQQRNHLPMEKKGIPNAEFFTEYGEANRYQIQEVVGKGSYGVVGSAIDTHTGERVAIKKINDVFDHISDATRILREIKLLRLLLHPDVVEIKHIMLPPSRREFRDVYVVFELMESDLHQVIKANDDLTPEHHQFFLYQLLRGLKYVHAANVFHRDLKPKNILANADCKLKICDFGLARVSFNDAPTAIFWTDYVATRWYRAPELCGSFFSKYTPAIDIWSVGCIFAEMLLGKPLFPGKNVVHQLDIMTDFLGTPPPEAISKIRNDKARRYLGNMRKKQPVPFSKKFPKADPSALRLLERLIAFDPKDRPSAEEALADPYFNGLSSKVREPSTQPISKLEFEFERKKLTKDDIRELIYREILEYHPQMLEEYLRGGNQLSFMYPSGVDRFRRQFAHLEENQGPGGRSNALQRQHASLPRERVPASKNETVEERSNDIERRTTAAVASTLDSPKASQQAEGTENGGGGGYSARNLMKSSSISGSKCIGVQSKTNIEDSIVEEQDETVAVKVASLHNS.

Residues 20 to 50 (RPSSSSSSNNHDQIQNPPTVSNPNDDEDLKK) are disordered. The segment covering 28–42 (NNHDQIQNPPTVSNP) has biased composition (polar residues). A Protein kinase domain is found at 90 to 381 (YQIQEVVGKG…AEEALADPYF (292 aa)). ATP-binding positions include 96-104 (VGKGSYGVV) and Lys-119. Asp-216 acts as the Proton acceptor in catalysis. At Thr-252 the chain carries Phosphothreonine. A TXY motif is present at residues 252–254 (TDY). Residue Tyr-254 is modified to Phosphotyrosine. Thr-257 is subject to Phosphothreonine. The disordered stretch occupies residues 458–535 (EENQGPGGRS…GGGYSARNLM (78 aa)). Basic and acidic residues predominate over residues 477 to 501 (LPRERVPASKNETVEERSNDIERRT). Polar residues predominate over residues 504–520 (AVASTLDSPKASQQAEG).

The protein belongs to the protein kinase superfamily. CMGC Ser/Thr protein kinase family. MAP kinase subfamily. As to quaternary structure, interacts with MKK7. Post-translationally, dually phosphorylated on Thr-252 and Tyr-254, which activates the enzyme.

It carries out the reaction L-seryl-[protein] + ATP = O-phospho-L-seryl-[protein] + ADP + H(+). It catalyses the reaction L-threonyl-[protein] + ATP = O-phospho-L-threonyl-[protein] + ADP + H(+). Its activity is regulated as follows. Activated by threonine and tyrosine phosphorylation. The protein is Mitogen-activated protein kinase 15 (MPK15) of Arabidopsis thaliana (Mouse-ear cress).